Reading from the N-terminus, the 353-residue chain is UPF0283 membrane protein YcjF (353 aa).

The next 3 membrane-spanning stretches (helical) occupy residues 70-90 (MVMG…IQWT), 100-120 (VALG…GSVV), and 213-233 (ESTL…FIAW).

It belongs to the UPF0283 family.

The protein localises to the cell inner membrane. In Shigella flexneri serotype 5b (strain 8401), this protein is UPF0283 membrane protein YcjF.